A 309-amino-acid polypeptide reads, in one-letter code: NAD kinase (309 aa).

Asp-89 (proton acceptor) is an active-site residue. NAD(+)-binding positions include 89–90 (DG), 163–164 (NE), Arg-191, Asp-193, and 204–209 (TAYSLS).

This sequence belongs to the NAD kinase family. The cofactor is a divalent metal cation.

The protein localises to the cytoplasm. The enzyme catalyses NAD(+) + ATP = ADP + NADP(+) + H(+). Functionally, involved in the regulation of the intracellular balance of NAD and NADP, and is a key enzyme in the biosynthesis of NADP. Catalyzes specifically the phosphorylation on 2'-hydroxyl of the adenosine moiety of NAD to yield NADP. This chain is NAD kinase, found in Shewanella halifaxensis (strain HAW-EB4).